Reading from the N-terminus, the 451-residue chain is UPF0210 protein lmo0534 (451 aa).

This sequence belongs to the UPF0210 family. Homodimer.

This Listeria monocytogenes serovar 1/2a (strain ATCC BAA-679 / EGD-e) protein is UPF0210 protein lmo0534.